We begin with the raw amino-acid sequence, 479 residues long: Calcium-dependent mitochondrial ATP-magnesium/phosphate carrier protein 3 (479 aa).

Topologically, residues 1 to 208 are mitochondrial intermembrane; it reads MESSKPKNRN…ISKHVKRSRL (208 aa). EF-hand domains lie at 33 to 68, 69 to 104, 105 to 135, and 136 to 171; these read EREI…LQIP, PEYK…KELE, LYRI…AGIE, and IDDE…YPHE. Residues Asp-82, Asn-84, Asp-86, Arg-88, and Glu-93 each contribute to the Ca(2+) site. Residues Asp-149, Asp-151, Asn-153, Thr-155, and Glu-160 each coordinate Ca(2+). Solcar repeat units follow at residues 203–286, 294–381, and 392–475; these read VKRS…LKPM, IGTS…LKDL, and PGPL…MKKN. Residues 209–226 traverse the membrane as a helical segment; it reads LLAGGLAGAVSRTATAPL. The Mitochondrial matrix portion of the chain corresponds to 227–260; it reads DRLKVVLQVQRAHAGVLPTIKKIWREDKLMGFFR. The helical transmembrane segment at 261 to 280 threads the bilayer; that stretch reads GNGLNVMKVAPESAIKFCAY. Residues 281–303 are Mitochondrial intermembrane-facing; that stretch reads EMLKPMIGGEDGDIGTSGRLMAG. Residues 304-317 form a helical membrane-spanning segment; that stretch reads GMAGALAQTAIYPM. At 318 to 355 the chain is on the mitochondrial matrix side; the sequence is DLVKTRLQTCVSEGGKAPKLWKLTKDIWVREGPRAFYK. Residues 356–375 traverse the membrane as a helical segment; the sequence is GLFPSLLGIVPYAGIDLAAY. Over 376–397 the chain is Mitochondrial intermembrane; the sequence is ETLKDLSRTYILQDTEPGPLIQ. Residues 398-415 form a helical membrane-spanning segment; it reads LSCGMTSGALGASCVYPL. Residues 416-449 lie on the Mitochondrial matrix side of the membrane; sequence QVVRTRMQADSSKTTMKQEFMNTMKGEGLRGFYR. A helical transmembrane segment spans residues 450–469; sequence GLLPNLLKVVPAASITYIVY. The Mitochondrial intermembrane portion of the chain corresponds to 470-479; that stretch reads EAMKKNMALD.

It belongs to the mitochondrial carrier (TC 2.A.29) family. In terms of tissue distribution, expressed in flowers, leaves, stems, roots and seedlings, mostly in seedlings.

The protein localises to the mitochondrion inner membrane. Counter-exchange transport activity is saturable and inhibited by pyridoxal-5'-phosphate, EDTA and EGTA. Activated by calcium Ca(2+) and manganese Mn(2+) ions, and slightly by iron Fe(2+) and zinc Zn(2+) ions. Repressed by copper ions Cu(2+) and slightly by magnesium Mg(2+) ions. Magnesium Mg(2+) ions promotes slightly ATP uptake, ATP-Mg(2+) being exchanged with ATP(4-). In terms of biological role, calcium-dependent mitochondrial carrier protein that catalyzes the import of ATP co-transported with metal divalent cations across the mitochondrial inner membrane in exchange for phosphate (Pi). Can transport phosphate, AMP, ADP, ATP, adenosine 5'-phosphosulfate, sulfate and thiosulfate, and, to a lesser extent, other nucleotides. Binds calcium ions Ca(2+). Also mediates calcium uptake. This chain is Calcium-dependent mitochondrial ATP-magnesium/phosphate carrier protein 3, found in Arabidopsis thaliana (Mouse-ear cress).